Here is a 995-residue protein sequence, read N- to C-terminus: Meckelin (995 aa).

The signal sequence occupies residues 1–36; sequence MATRGGAGVAMAVWSLLSARAVTAFLLLFLPRFLQA. Positions 37 to 280 are cysteine-rich; it reads QTFSFPFQQP…FQFIFENTAG (244 aa). Over 37-519 the chain is Extracellular; that stretch reads QTFSFPFQQP…SVTYEMDHGE (483 aa). 11 disulfides stabilise this stretch: C49–C62, C65–C78, C80–C97, C100–C114, C117–C127, C129–C150, C153–C170, C173–C184, C186–C197, C237–C246, and C253–C268. An N-linked (GlcNAc...) asparagine glycan is attached at N141. Residue N179 is glycosylated (N-linked (GlcNAc...) asparagine). An N-linked (GlcNAc...) asparagine glycan is attached at N242. A glycan (N-linked (GlcNAc...) asparagine) is linked at N318. A disulfide bond links C357 and C378. A helical membrane pass occupies residues 520–548; it reads AHVQTDIALGVLGGLAVLASLLKTAGWKR. Topologically, residues 549–558 are cytoplasmic; it reads RIGSPMIDLQ. A helical membrane pass occupies residues 559 to 590; the sequence is TVVKFLVYYAGDLANVFFIITVGTGLYWLIFF. Residues 591–603 lie on the Extracellular side of the membrane; that stretch reads KAQKSVSVLLPMP. Residues 604–631 form a helical membrane-spanning segment; sequence IQEERFVTYVGCAFALKALQFLHKLISQ. The Cytoplasmic segment spans residues 632–670; it reads ITIDVFFIDWERPKGKVLKAVEGEGGVRSATVPVSIWRT. The segment at residues 671-679 is an intramembrane region (helical); sequence YFVANEWNE. Residues 671–701 traverse the membrane as a discontinuously helical segment; sequence YFVANEWNEIQTVRKINSLFQVLTVLFFLEV. An intramembrane segment occupies 680-688; sequence IQTVRKINS. The segment at residues 689-701 is an intramembrane region (helical); it reads LFQVLTVLFFLEV. At 702-731 the chain is on the extracellular side; it reads VGFKNLALMDSSSSLSRNPPSYIAPYSCIL. Residues 732 to 757 constitute an intramembrane region (helical); the sequence is RYAVSAALWLAIGIIQVVFFAVFYER. Residues 732-771 traverse the membrane as a discontinuously helical segment; sequence RYAVSAALWLAIGIIQVVFFAVFYERFIEDKIRQFVDLCS. Residues 758-762 lie within the membrane without spanning it; sequence FIEDK. The helical intramembrane region spans 763–771; it reads IRQFVDLCS. Over 772–926 the chain is Cytoplasmic; the sequence is MSNISVFLLS…SIFYNDEGYS (155 aa). A coiled-coil region spans residues 828 to 917; sequence GQTFEIAISN…MEFMEPMEKS (90 aa). The segment at residues 927-929 is an intramembrane region (helical); the sequence is FSS. A discontinuously helical membrane pass occupies residues 927 to 952; it reads FSSVLYYGNEATLLIFDLLFFCVVDL. The stretch at 930 to 936 is an intramembrane region; sequence VLYYGNE. The helical intramembrane region spans 937–952; sequence ATLLIFDLLFFCVVDL. The Extracellular portion of the chain corresponds to 953–957; the sequence is ACQNF. The chain crosses the membrane as a helical span at residues 958-985; sequence ILASFLTYLQQEIFRYIRNTVGQKNLAS. The Cytoplasmic segment spans residues 986 to 995; that stretch reads KTLVDQRFLI.

In terms of assembly, homodimer. Part of the tectonic-like complex (also named B9 complex). Interacts with DNAJB9, DNAJC10 and mutated SFTPC. Interacts with SYNE2 during the early establishment of cell polarity. Interacts (via C-terminus) with FLNA. Interacts with TMEM218. Interacts with WNT5A. Interacts with ROR2. Widely expressed in adult and fetal tissues. Expressed at higher level in spinal cord.

Its subcellular location is the cell membrane. It localises to the endoplasmic reticulum membrane. The protein localises to the cell projection. The protein resides in the cilium. It is found in the cytoplasm. Its subcellular location is the cytoskeleton. It localises to the cilium basal body. Its function is as follows. Required for ciliary structure and function. Part of the tectonic-like complex which is required for tissue-specific ciliogenesis and may regulate ciliary membrane composition. Involved in centrosome migration to the apical cell surface during early ciliogenesis. Involved in the regulation of cilia length and appropriate number through the control of centrosome duplication. Is a key regulator of stereociliary bundle orientation. Required for epithelial cell branching morphology. Essential for endoplasmic reticulum-associated degradation (ERAD) of surfactant protein C (SFTPC). Involved in the negative regulation of canonical Wnt signaling, and activation of the non-canonical cascade stimulated by WNT5A. In non-canonical Wnt signaling, it may act as ROR2 coreceptor. The sequence is that of Meckelin (TMEM67) from Homo sapiens (Human).